Reading from the N-terminus, the 341-residue chain is UDP-3-O-acylglucosamine N-acyltransferase (341 aa).

Histidine 239 functions as the Proton acceptor in the catalytic mechanism.

Belongs to the transferase hexapeptide repeat family. LpxD subfamily. In terms of assembly, homotrimer.

The catalysed reaction is a UDP-3-O-[(3R)-3-hydroxyacyl]-alpha-D-glucosamine + a (3R)-hydroxyacyl-[ACP] = a UDP-2-N,3-O-bis[(3R)-3-hydroxyacyl]-alpha-D-glucosamine + holo-[ACP] + H(+). The protein operates within bacterial outer membrane biogenesis; LPS lipid A biosynthesis. Catalyzes the N-acylation of UDP-3-O-acylglucosamine using 3-hydroxyacyl-ACP as the acyl donor. Is involved in the biosynthesis of lipid A, a phosphorylated glycolipid that anchors the lipopolysaccharide to the outer membrane of the cell. This is UDP-3-O-acylglucosamine N-acyltransferase from Photobacterium profundum (strain SS9).